The chain runs to 64 residues: Conotoxin Pu3.5 (64 aa).

The N-terminal stretch at leucine 1–alanine 16 is a signal peptide. Residues valine 17–arginine 49 constitute a propeptide that is removed on maturation. Intrachain disulfides connect cysteine 50–cysteine 63, cysteine 51–cysteine 58, and cysteine 54–cysteine 62.

Belongs to the conotoxin M superfamily. In terms of tissue distribution, expressed by the venom duct.

Its subcellular location is the secreted. The protein is Conotoxin Pu3.5 of Conus pulicarius (Flea-bitten cone).